The chain runs to 264 residues: Hydroxyethylthiazole kinase (264 aa).

Met45 contributes to the substrate binding site. 2 residues coordinate ATP: Arg121 and Ser167. Substrate is bound at residue Gly194.

Belongs to the Thz kinase family. Requires Mg(2+) as cofactor.

It carries out the reaction 5-(2-hydroxyethyl)-4-methylthiazole + ATP = 4-methyl-5-(2-phosphooxyethyl)-thiazole + ADP + H(+). It functions in the pathway cofactor biosynthesis; thiamine diphosphate biosynthesis; 4-methyl-5-(2-phosphoethyl)-thiazole from 5-(2-hydroxyethyl)-4-methylthiazole: step 1/1. Functionally, catalyzes the phosphorylation of the hydroxyl group of 4-methyl-5-beta-hydroxyethylthiazole (THZ). The protein is Hydroxyethylthiazole kinase of Aliivibrio salmonicida (strain LFI1238) (Vibrio salmonicida (strain LFI1238)).